The sequence spans 423 residues: Acetylornithine aminotransferase, mitochondrial (423 aa).

The N-terminal 13 residues, 1 to 13 (MFKRYLSSTSSRR), are a transit peptide targeting the mitochondrion. Lys-276 carries the post-translational modification N6-(pyridoxal phosphate)lysine.

It belongs to the class-III pyridoxal-phosphate-dependent aminotransferase family. Pyridoxal 5'-phosphate is required as a cofactor.

The protein resides in the mitochondrion matrix. The catalysed reaction is N(2)-acetyl-L-ornithine + 2-oxoglutarate = N-acetyl-L-glutamate 5-semialdehyde + L-glutamate. The protein operates within amino-acid biosynthesis; L-arginine biosynthesis; N(2)-acetyl-L-ornithine from L-glutamate: step 4/4. Its function is as follows. catalyzes the conversion of N-acetylglutamate-gamma-semialdehyde (NAGSA) to N-acetylornithine in arginine biosynthesis. The sequence is that of Acetylornithine aminotransferase, mitochondrial (ARG8) from Saccharomyces cerevisiae (strain ATCC 204508 / S288c) (Baker's yeast).